The sequence spans 728 residues: MGLNFREKAWILLGILCCSSLICSVKAIVTYDRKAVIINGQRRILLSGSIHYPRSTPEMWPDLIQKAKDGGLDVIQTYVFWNGHEPSPGQYYFEDRYDLVKFIKVVQQAGLYVHLRIGPYVCAEWNFGGFPVWLKYVPGMVFRTDNEPFKAAMQKFTEKIVRMMKEEKLFETQGGPIILSQIENEYGPIEWEIGAPGKAYTKWVAEMAQGLSTGVPWIMCKQDDAPNSIINTCNGFYCENFKPNSDNKPKMWTENWTGWFTEFGGAVPYRPAEDIALSVARFIQNGGSFINYYMYHGGTNFDRTAGEFIATSYDYDAPLDEYGLPREPKYSHLKRLHKVIKLCEPALVSADPTVTSLGDKQEAHVFKSKSSCAAFLSNYNTSSAARVLFGGSTYDLPPWSVSILPDCKTEYYNTAKVQVRTSSIHMKMVPTNTPFSWGSYNEEIPSANDNGTFSQDGLVEQISITRDKTDYFWYLTDITISPDEKFLTGEDPLLTIGSAGHALHVFVNGQLAGTAYGSLEKPKLTFSQKIKLHAGVNKLALLSTAAGLPNVGVHYETWNTGVLGPVTLNGVNSGTWDMTKWKWSYKIGTKGEALSVHTLAGSSTVEWKEGSLVAKKQPLTWYKSTFDSPTGNEPLALDMNTMGKGQMWINGQNIGRHWPAYTARGKCERCSYAGTFTEKKCLSNCGEASQRWYHVPRSWLKPTNNLVIVLEEWGGEPNGISLVKRTAK.

Positions 1 to 27 (MGLNFREKAWILLGILCCSSLICSVKA) are cleaved as a signal peptide. The active-site Proton donor is the glutamate 185. Residue glutamate 254 is the Nucleophile of the active site. Residues asparagine 255, asparagine 380, and asparagine 450 are each glycosylated (N-linked (GlcNAc...) asparagine).

Belongs to the glycosyl hydrolase 35 family. Ubiquitous, with higher expression levels in roots and siliques.

It is found in the secreted. Its subcellular location is the extracellular space. It localises to the apoplast. It carries out the reaction Hydrolysis of terminal non-reducing beta-D-galactose residues in beta-D-galactosides.. This chain is Beta-galactosidase 12 (BGAL12), found in Arabidopsis thaliana (Mouse-ear cress).